We begin with the raw amino-acid sequence, 32 residues long: Photosystem II reaction center protein T (32 aa).

Residue methionine 1 is modified to N-formylmethionine. At 1–2 the chain is on the lumenal side; the sequence is ME. The chain crosses the membrane as a helical span at residues 3 to 23; it reads TITYVFIFACIIALFFFAIFF. At 24-32 the chain is on the cytoplasmic side; that stretch reads REPPRITKK.

It belongs to the PsbT family. PSII is composed of 1 copy each of membrane proteins PsbA, PsbB, PsbC, PsbD, PsbE, PsbF, PsbH, PsbI, PsbJ, PsbK, PsbL, PsbM, PsbT, PsbX, PsbY, PsbZ, Psb30/Ycf12, PsbO, CyanoQ (PsbQ), PsbU, PsbV and a large number of cofactors. It forms dimeric complexes. Part of a photosystem II (PSII) assembly intermediate complex PSII-I; crystallized from a strain deleted of psbJ, it forms monomeric PSII before addition of the oxygen evolving complex. PSII-I includes 3 assembly factors not found in mature PSII (Psb27, Psb28 and Psb34). PSII binds multiple chlorophylls, carotenoids and specific lipids. is required as a cofactor.

It is found in the cellular thylakoid membrane. Its function is as follows. Found at the monomer-monomer interface of the photosystem II (PS II) dimer, plays a role in assembly and dimerization of PSII. PSII is a light-driven water plastoquinone oxidoreductase, using light energy to abstract electrons from H(2)O, generating a proton gradient subsequently used for ATP formation. In Thermosynechococcus vestitus (strain NIES-2133 / IAM M-273 / BP-1), this protein is Photosystem II reaction center protein T.